Reading from the N-terminus, the 237-residue chain is Large ribosomal subunit protein uL1 (237 aa).

This sequence belongs to the universal ribosomal protein uL1 family. In terms of assembly, part of the 50S ribosomal subunit.

Functionally, binds directly to 23S rRNA. The L1 stalk is quite mobile in the ribosome, and is involved in E site tRNA release. Protein L1 is also a translational repressor protein, it controls the translation of the L11 operon by binding to its mRNA. The chain is Large ribosomal subunit protein uL1 from Dehalococcoides mccartyi (strain ATCC BAA-2100 / JCM 16839 / KCTC 5957 / BAV1).